The following is a 339-amino-acid chain: Tetraacyldisaccharide 4'-kinase (339 aa).

53 to 60 contributes to the ATP binding site; it reads TCGGAGKT.

Belongs to the LpxK family.

The enzyme catalyses a lipid A disaccharide + ATP = a lipid IVA + ADP + H(+). It participates in glycolipid biosynthesis; lipid IV(A) biosynthesis; lipid IV(A) from (3R)-3-hydroxytetradecanoyl-[acyl-carrier-protein] and UDP-N-acetyl-alpha-D-glucosamine: step 6/6. In terms of biological role, transfers the gamma-phosphate of ATP to the 4'-position of a tetraacyldisaccharide 1-phosphate intermediate (termed DS-1-P) to form tetraacyldisaccharide 1,4'-bis-phosphate (lipid IVA). This is Tetraacyldisaccharide 4'-kinase from Bartonella henselae (strain ATCC 49882 / DSM 28221 / CCUG 30454 / Houston 1) (Rochalimaea henselae).